We begin with the raw amino-acid sequence, 146 residues long: uncharacterized protein (146 aa).

A disordered region spans residues 87–121 (SRSHHSTAKSAKSALSSDSGDGSDPDPEPETFPSA). The span at 94 to 106 (AKSAKSALSSDSG) shows a compositional bias: low complexity.

This is an uncharacterized protein from Escherichia coli (strain K12).